A 236-amino-acid chain; its full sequence is 4-hydroxy-tetrahydrodipicolinate reductase (236 aa).

Residues 11-16 (GASGRM), 92-94 (GTT), and 116-119 (GSNF) contribute to the NAD(+) site. Catalysis depends on histidine 148, which acts as the Proton donor/acceptor. (S)-2,3,4,5-tetrahydrodipicolinate is bound at residue histidine 149. Lysine 152 (proton donor) is an active-site residue. 158-159 (GS) is a (S)-2,3,4,5-tetrahydrodipicolinate binding site.

Belongs to the DapB family.

The protein localises to the cytoplasm. The catalysed reaction is (S)-2,3,4,5-tetrahydrodipicolinate + NAD(+) + H2O = (2S,4S)-4-hydroxy-2,3,4,5-tetrahydrodipicolinate + NADH + H(+). The enzyme catalyses (S)-2,3,4,5-tetrahydrodipicolinate + NADP(+) + H2O = (2S,4S)-4-hydroxy-2,3,4,5-tetrahydrodipicolinate + NADPH + H(+). The protein operates within amino-acid biosynthesis; L-lysine biosynthesis via DAP pathway; (S)-tetrahydrodipicolinate from L-aspartate: step 4/4. Functionally, catalyzes the conversion of 4-hydroxy-tetrahydrodipicolinate (HTPA) to tetrahydrodipicolinate. This is 4-hydroxy-tetrahydrodipicolinate reductase from Xylella fastidiosa (strain M23).